The following is a 315-amino-acid chain: Homoserine O-succinyltransferase (315 aa).

The active-site Acyl-thioester intermediate is Cys-142. 2 residues coordinate substrate: Lys-163 and Ser-192. The active-site Proton acceptor is His-235. The active site involves Glu-237. Arg-249 serves as a coordination point for substrate.

The protein belongs to the MetA family.

The protein localises to the cytoplasm. The catalysed reaction is L-homoserine + succinyl-CoA = O-succinyl-L-homoserine + CoA. It functions in the pathway amino-acid biosynthesis; L-methionine biosynthesis via de novo pathway; O-succinyl-L-homoserine from L-homoserine: step 1/1. Transfers a succinyl group from succinyl-CoA to L-homoserine, forming succinyl-L-homoserine. This is Homoserine O-succinyltransferase from Shewanella piezotolerans (strain WP3 / JCM 13877).